Consider the following 51-residue polypeptide: Magnetosome protein Mms5 (51 aa).

Topologically, residues 1–8 are lumenal; it reads MLSAKGVS. Residues 9-16 form an LG region region; the sequence is LGLGLGLG. A helical membrane pass occupies residues 9–29; that stretch reads LGLGLGLGAWGPVLLGVVGVA. Residues 30 to 51 lie on the Cytoplasmic side of the membrane; the sequence is GALALYGYYKNRNAEPAAAEAV.

Belongs to the magnetosome MamD/Mms5 family. In terms of processing, may undergo N-terminal cleavage.

It localises to the magnetosome membrane. Its function is as follows. Might be involved in magnetite crystal growth. The protein is Magnetosome protein Mms5 of Magnetospirillum gryphiswaldense (strain DSM 6361 / JCM 21280 / NBRC 15271 / MSR-1).